Here is an 86-residue protein sequence, read N- to C-terminus: MVKIRLMRLGRHKLPSYRMVVVDSRVKRDGSYIELIGHIDPINGTNKLNGALAIEWLKKGAQPTDTVKSILSKEGIWKQYAASKKA.

Belongs to the bacterial ribosomal protein bS16 family.

The protein is Small ribosomal subunit protein bS16 of Mycoplasmoides gallisepticum (strain R(low / passage 15 / clone 2)) (Mycoplasma gallisepticum).